A 435-amino-acid polypeptide reads, in one-letter code: Tektin-4 (435 aa).

A compositionally biased stretch (basic and acidic residues) spans 60–69 (DQSERQRHES). Residues 60–96 (DQSERQRHESQQLATETQALAQRTQQDSTRTVGERLQ) form a disordered region. The segment covering 70 to 85 (QQLATETQALAQRTQQ) has biased composition (low complexity). 3 coiled-coil regions span residues 102-180 (KSEL…LLKR), 310-336 (LHKT…DKEA), and 363-411 (FRLL…TNSL).

The protein belongs to the tektin family. Microtubule inner protein component of sperm flagellar doublet microtubules. In terms of processing, ubiquitinated, leading to its degradation. Deubiquitinated by USP16, promoting its stability. Strongly expressed in spermatozoa. Also detected at low levels in pancreas. Expressed in airway epithelial cells.

The protein localises to the cytoplasm. The protein resides in the cytoskeleton. It localises to the cilium axoneme. It is found in the flagellum axoneme. In terms of biological role, microtubule inner protein (MIP) part of the dynein-decorated doublet microtubules (DMTs) in cilia and flagellar axoneme. Forms filamentous polymers in the walls of ciliary and flagellar microtubules. Contributes to normal sperm motility. The protein is Tektin-4 of Homo sapiens (Human).